A 142-amino-acid polypeptide reads, in one-letter code: Large ribosomal subunit protein uL13 (142 aa).

Belongs to the universal ribosomal protein uL13 family. As to quaternary structure, part of the 50S ribosomal subunit.

Functionally, this protein is one of the early assembly proteins of the 50S ribosomal subunit, although it is not seen to bind rRNA by itself. It is important during the early stages of 50S assembly. This Actinobacillus pleuropneumoniae serotype 5b (strain L20) protein is Large ribosomal subunit protein uL13.